Consider the following 311-residue polypeptide: Bifunctional protein FolD (311 aa).

Residue 174 to 176 (GKG) participates in NADP(+) binding.

This sequence belongs to the tetrahydrofolate dehydrogenase/cyclohydrolase family. In terms of assembly, homodimer.

The enzyme catalyses (6R)-5,10-methylene-5,6,7,8-tetrahydrofolate + NADP(+) = (6R)-5,10-methenyltetrahydrofolate + NADPH. It carries out the reaction (6R)-5,10-methenyltetrahydrofolate + H2O = (6R)-10-formyltetrahydrofolate + H(+). The protein operates within one-carbon metabolism; tetrahydrofolate interconversion. Its function is as follows. Catalyzes the oxidation of 5,10-methylenetetrahydrofolate to 5,10-methenyltetrahydrofolate and then the hydrolysis of 5,10-methenyltetrahydrofolate to 10-formyltetrahydrofolate. The polypeptide is Bifunctional protein FolD (Pyrobaculum aerophilum (strain ATCC 51768 / DSM 7523 / JCM 9630 / CIP 104966 / NBRC 100827 / IM2)).